The sequence spans 87 residues: Small ribosomal subunit protein bS18B (87 aa).

The protein belongs to the bacterial ribosomal protein bS18 family. As to quaternary structure, part of the 30S ribosomal subunit. Forms a tight heterodimer with protein bS6.

In terms of biological role, binds as a heterodimer with protein bS6 to the central domain of the 16S rRNA, where it helps stabilize the platform of the 30S subunit. The sequence is that of Small ribosomal subunit protein bS18B from Mycolicibacterium vanbaalenii (strain DSM 7251 / JCM 13017 / BCRC 16820 / KCTC 9966 / NRRL B-24157 / PYR-1) (Mycobacterium vanbaalenii).